The following is a 161-amino-acid chain: Regulator of ribonuclease activity A (161 aa).

The protein belongs to the RraA family. As to quaternary structure, homotrimer. Binds to both RNA-binding sites in the C-terminal region of Rne and to RhlB.

The protein resides in the cytoplasm. Functionally, globally modulates RNA abundance by binding to RNase E (Rne) and regulating its endonucleolytic activity. Can modulate Rne action in a substrate-dependent manner by altering the composition of the degradosome. Modulates RNA-binding and helicase activities of the degradosome. This is Regulator of ribonuclease activity A from Pectobacterium atrosepticum (strain SCRI 1043 / ATCC BAA-672) (Erwinia carotovora subsp. atroseptica).